The primary structure comprises 635 residues: Threonine--tRNA ligase (635 aa).

The 61-residue stretch at Met-1 to Thr-61 folds into the TGS domain. The segment at Asp-242 to Pro-533 is catalytic. Zn(2+)-binding residues include Cys-333, His-384, and His-510.

It belongs to the class-II aminoacyl-tRNA synthetase family. As to quaternary structure, homodimer. Zn(2+) serves as cofactor.

The protein resides in the cytoplasm. It catalyses the reaction tRNA(Thr) + L-threonine + ATP = L-threonyl-tRNA(Thr) + AMP + diphosphate + H(+). Catalyzes the attachment of threonine to tRNA(Thr) in a two-step reaction: L-threonine is first activated by ATP to form Thr-AMP and then transferred to the acceptor end of tRNA(Thr). Also edits incorrectly charged L-seryl-tRNA(Thr). The chain is Threonine--tRNA ligase from Francisella philomiragia subsp. philomiragia (strain ATCC 25017 / CCUG 19701 / FSC 153 / O#319-036).